The primary structure comprises 160 residues: Large ribosomal subunit protein eL21 (160 aa).

It belongs to the eukaryotic ribosomal protein eL21 family.

The polypeptide is Large ribosomal subunit protein eL21 (RPL21) (Encephalitozoon cuniculi (strain GB-M1) (Microsporidian parasite)).